Consider the following 38-residue polypeptide: ECRYFWGECNDEMVCCEHLVCKEKWPITYKICVWDRTF.

3 disulfides stabilise this stretch: Cys2/Cys16, Cys9/Cys21, and Cys15/Cys32. A Phenylalanine amide modification is found at Phe38.

It belongs to the neurotoxin 10 (Hwtx-1) family. 13 (Hntx-13) subfamily. In terms of tissue distribution, expressed by the venom gland.

Its subcellular location is the secreted. Its function is as follows. Inhibitor of voltage-gated potassium channels. It specifically inhibits Kv2.1/KCNB1 channels. The chain is Kappa-theraphotoxin-Hm2a from Heteroscodra maculata (Togo starburst tarantula).